Reading from the N-terminus, the 499-residue chain is Probable cytosol aminopeptidase (499 aa).

The Mn(2+) site is built by lysine 269 and aspartate 274. Lysine 281 is a catalytic residue. Aspartate 292, aspartate 351, and glutamate 353 together coordinate Mn(2+). Arginine 355 is a catalytic residue.

It belongs to the peptidase M17 family. The cofactor is Mn(2+).

The protein localises to the cytoplasm. The enzyme catalyses Release of an N-terminal amino acid, Xaa-|-Yaa-, in which Xaa is preferably Leu, but may be other amino acids including Pro although not Arg or Lys, and Yaa may be Pro. Amino acid amides and methyl esters are also readily hydrolyzed, but rates on arylamides are exceedingly low.. It carries out the reaction Release of an N-terminal amino acid, preferentially leucine, but not glutamic or aspartic acids.. Presumably involved in the processing and regular turnover of intracellular proteins. Catalyzes the removal of unsubstituted N-terminal amino acids from various peptides. The sequence is that of Probable cytosol aminopeptidase from Haemophilus ducreyi (strain 35000HP / ATCC 700724).